The sequence spans 164 residues: UPF0304 protein MS2240 (164 aa).

It belongs to the UPF0304 family.

The protein is UPF0304 protein MS2240 of Mannheimia succiniciproducens (strain KCTC 0769BP / MBEL55E).